The sequence spans 91 residues: Small ribosomal subunit protein uS15 (91 aa).

It belongs to the universal ribosomal protein uS15 family. As to quaternary structure, part of the 30S ribosomal subunit. Forms a bridge to the 50S subunit in the 70S ribosome, contacting the 23S rRNA.

Functionally, one of the primary rRNA binding proteins, it binds directly to 16S rRNA where it helps nucleate assembly of the platform of the 30S subunit by binding and bridging several RNA helices of the 16S rRNA. Its function is as follows. Forms an intersubunit bridge (bridge B4) with the 23S rRNA of the 50S subunit in the ribosome. The polypeptide is Small ribosomal subunit protein uS15 (Legionella pneumophila (strain Corby)).